The following is a 1295-amino-acid chain: DNA-directed RNA polymerase subunit beta' (1295 aa).

Residues Cys66, Cys68, Cys81, and Cys84 each contribute to the Zn(2+) site. Asp562, Asp564, and Asp566 together coordinate Mg(2+). Zn(2+)-binding residues include Cys901, Cys975, Cys982, and Cys985.

It belongs to the RNA polymerase beta' chain family. As to quaternary structure, the RNAP catalytic core consists of 2 alpha, 1 beta, 1 beta' and 1 omega subunit. When a sigma factor is associated with the core the holoenzyme is formed, which can initiate transcription. Mg(2+) is required as a cofactor. Zn(2+) serves as cofactor.

It catalyses the reaction RNA(n) + a ribonucleoside 5'-triphosphate = RNA(n+1) + diphosphate. Functionally, DNA-dependent RNA polymerase catalyzes the transcription of DNA into RNA using the four ribonucleoside triphosphates as substrates. The polypeptide is DNA-directed RNA polymerase subunit beta' (Rubrobacter xylanophilus (strain DSM 9941 / JCM 11954 / NBRC 16129 / PRD-1)).